We begin with the raw amino-acid sequence, 127 residues long: MSNIPAELRFAESHEWARLEADGSVTVGISDHAQEALGDVVFVELAEVGKVFGAGDAAGVVESVKAASDIYAPVGGEVIAVNEELADSPELLNEEPYGSWIFKLKPSNPAELDKLLDAAGYQALIGE.

The region spanning 24–105 (SVTVGISDHA…PYGSWIFKLK (82 aa)) is the Lipoyl-binding domain. N6-lipoyllysine is present on Lys-65.

This sequence belongs to the GcvH family. As to quaternary structure, the glycine cleavage system is composed of four proteins: P, T, L and H. (R)-lipoate serves as cofactor.

Functionally, the glycine cleavage system catalyzes the degradation of glycine. The H protein shuttles the methylamine group of glycine from the P protein to the T protein. This chain is Glycine cleavage system H protein 2, found in Pseudomonas putida (strain ATCC 47054 / DSM 6125 / CFBP 8728 / NCIMB 11950 / KT2440).